The primary structure comprises 115 residues: NADH-ubiquinone oxidoreductase chain 3 (115 aa).

Helical transmembrane passes span 4 to 24 (FMAL…AFWL), 55 to 75 (FFLV…LLPL), and 87 to 107 (MMLT…YEWV).

The protein belongs to the complex I subunit 3 family. In terms of assembly, core subunit of respiratory chain NADH dehydrogenase (Complex I) which is composed of 45 different subunits. Interacts with TMEM186. Interacts with TMEM242.

It is found in the mitochondrion inner membrane. It catalyses the reaction a ubiquinone + NADH + 5 H(+)(in) = a ubiquinol + NAD(+) + 4 H(+)(out). In terms of biological role, core subunit of the mitochondrial membrane respiratory chain NADH dehydrogenase (Complex I) which catalyzes electron transfer from NADH through the respiratory chain, using ubiquinone as an electron acceptor. Essential for the catalytic activity of complex I. This Osgoodomys banderanus (Michoacan deer mouse) protein is NADH-ubiquinone oxidoreductase chain 3.